A 454-amino-acid chain; its full sequence is tRNA modification GTPase MnmE (454 aa).

Positions 23, 80, and 120 each coordinate (6S)-5-formyl-5,6,7,8-tetrahydrofolate. Positions 216–377 (GMKVVIAGRP…LRDHLKQSMG (162 aa)) constitute a TrmE-type G domain. Position 226 (N226) interacts with K(+). GTP-binding positions include 226–231 (NAGKSS), 245–251 (TDIAGTT), 270–273 (DTAG), 335–338 (NKAD), and 358–360 (SAR). S230 lines the Mg(2+) pocket. 3 residues coordinate K(+): T245, I247, and T250. Residue T251 participates in Mg(2+) binding. (6S)-5-formyl-5,6,7,8-tetrahydrofolate is bound at residue K454.

The protein belongs to the TRAFAC class TrmE-Era-EngA-EngB-Septin-like GTPase superfamily. TrmE GTPase family. Homodimer. Heterotetramer of two MnmE and two MnmG subunits. It depends on K(+) as a cofactor.

It localises to the cytoplasm. Functionally, exhibits a very high intrinsic GTPase hydrolysis rate. Involved in the addition of a carboxymethylaminomethyl (cmnm) group at the wobble position (U34) of certain tRNAs, forming tRNA-cmnm(5)s(2)U34. The polypeptide is tRNA modification GTPase MnmE (Pectobacterium carotovorum subsp. carotovorum (strain PC1)).